The sequence spans 475 residues: 3-isopropylmalate dehydratase large subunit (475 aa).

[4Fe-4S] cluster contacts are provided by Cys348, Cys408, and Cys411.

The protein belongs to the aconitase/IPM isomerase family. LeuC type 1 subfamily. Heterodimer of LeuC and LeuD. The cofactor is [4Fe-4S] cluster.

The catalysed reaction is (2R,3S)-3-isopropylmalate = (2S)-2-isopropylmalate. It functions in the pathway amino-acid biosynthesis; L-leucine biosynthesis; L-leucine from 3-methyl-2-oxobutanoate: step 2/4. In terms of biological role, catalyzes the isomerization between 2-isopropylmalate and 3-isopropylmalate, via the formation of 2-isopropylmaleate. This is 3-isopropylmalate dehydratase large subunit from Acidobacterium capsulatum (strain ATCC 51196 / DSM 11244 / BCRC 80197 / JCM 7670 / NBRC 15755 / NCIMB 13165 / 161).